The following is a 98-amino-acid chain: NADH-ubiquinone oxidoreductase chain 4L (98 aa).

The next 3 helical transmembrane spans lie at 1–21 (MSLT…GLLL), 29–49 (SLLC…MTIL), and 61–81 (IILL…LVMV).

The protein belongs to the complex I subunit 4L family. In terms of assembly, core subunit of respiratory chain NADH dehydrogenase (Complex I) which is composed of 45 different subunits.

Its subcellular location is the mitochondrion inner membrane. The catalysed reaction is a ubiquinone + NADH + 5 H(+)(in) = a ubiquinol + NAD(+) + 4 H(+)(out). In terms of biological role, core subunit of the mitochondrial membrane respiratory chain NADH dehydrogenase (Complex I) which catalyzes electron transfer from NADH through the respiratory chain, using ubiquinone as an electron acceptor. Part of the enzyme membrane arm which is embedded in the lipid bilayer and involved in proton translocation. This Vampyrodes caraccioli (Great stripe-faced bat) protein is NADH-ubiquinone oxidoreductase chain 4L (MT-ND4L).